A 103-amino-acid chain; its full sequence is Pro-corazonin (103 aa).

The first 19 residues, 1–19 (MSANVTLLLIFVTLASVTA), serve as a signal peptide directing secretion. Residue glutamine 20 is modified to Pyrrolidone carboxylic acid. Asparagine 30 carries the asparagine amide modification. Positions 34–103 (DQGHLRPELK…NLNAMMDAFY (70 aa)) are excised as a propeptide.

In terms of tissue distribution, expressed in corpora cardiaca (CC), corpora allata (CA), antennal lobe (AL) and gnathal ganglion (GNG) (at protein level). Expression in CC and CA detected in all animals, expression in AL and in GNG in some animals.

Its subcellular location is the secreted. Its function is as follows. Cardioactive peptide. Corazonin is probably involved in the physiological regulation of the heart beat. This chain is Pro-corazonin, found in Agrotis ipsilon (Black cutworm moth).